The following is a 149-amino-acid chain: Calmodulin (149 aa).

A2 bears the N-acetylalanine mark. EF-hand domains are found at residues E8–N43, P44–D79, D81–K116, and L117–K149. 19 residues coordinate Ca(2+): D21, D23, D25, Q27, E32, D57, D59, N61, T63, E68, D94, D96, N98, E105, D130, D132, D134, R136, and E141.

Belongs to the calmodulin family.

Functionally, calmodulin mediates the control of a large number of enzymes, ion channels and other proteins by Ca(2+). Among the enzymes to be stimulated by the calmodulin-Ca(2+) complex are a number of protein kinases and phosphatases. This Emericella nidulans (strain FGSC A4 / ATCC 38163 / CBS 112.46 / NRRL 194 / M139) (Aspergillus nidulans) protein is Calmodulin (camA).